A 335-amino-acid polypeptide reads, in one-letter code: Glycerol-3-phosphate dehydrogenase [NAD(P)+] (335 aa).

NADPH is bound by residues S15, Y16, H36, and K110. K110, G139, and T141 together coordinate sn-glycerol 3-phosphate. A143 contacts NADPH. Residues K195, D248, S258, R259, and N260 each contribute to the sn-glycerol 3-phosphate site. K195 acts as the Proton acceptor in catalysis. Position 259 (R259) interacts with NADPH. Residues V283 and E285 each coordinate NADPH.

It belongs to the NAD-dependent glycerol-3-phosphate dehydrogenase family.

The protein resides in the cytoplasm. It catalyses the reaction sn-glycerol 3-phosphate + NAD(+) = dihydroxyacetone phosphate + NADH + H(+). It carries out the reaction sn-glycerol 3-phosphate + NADP(+) = dihydroxyacetone phosphate + NADPH + H(+). It participates in membrane lipid metabolism; glycerophospholipid metabolism. Functionally, catalyzes the reduction of the glycolytic intermediate dihydroxyacetone phosphate (DHAP) to sn-glycerol 3-phosphate (G3P), the key precursor for phospholipid synthesis. The protein is Glycerol-3-phosphate dehydrogenase [NAD(P)+] of Mannheimia succiniciproducens (strain KCTC 0769BP / MBEL55E).